The following is a 422-amino-acid chain: Interleukin-11 receptor subunit alpha (422 aa).

A signal peptide spans Met-1–Ala-22. Residues Ser-24–Ala-370 lie on the Extracellular side of the membrane. Positions Pro-27–Gly-110 constitute an Ig-like C2-type domain. 3 cysteine pairs are disulfide-bonded: Cys-48–Cys-94, Cys-120–Cys-130, and Cys-170–Cys-180. Fibronectin type-III domains follow at residues Pro-112–Asp-219 and Pro-220–Thr-317. A glycan (N-linked (GlcNAc...) asparagine) is linked at Asn-127. Asn-194 is a glycosylation site (N-linked (GlcNAc...) asparagine). A WSXWS motif motif is present at residues Trp-304–Ser-308. The segment at Glu-335–Arg-355 is disordered. Residues Ser-371–Leu-391 traverse the membrane as a helical segment. The Cytoplasmic segment spans residues Arg-392–Leu-422. The disordered stretch occupies residues Lys-398–Leu-422. The segment covering Val-413 to Leu-422 has biased composition (basic and acidic residues).

Belongs to the type I cytokine receptor family. Type 3 subfamily. In terms of assembly, on IL11 binding, forms a multimer complex with IL6ST/gp130. Post-translationally, a short soluble form is also released from the membrane by proteolysis. The sIL11RA is formed either by limited proteolysis of membrane-bound receptors, a process referred to as ectodomain shedding, or directly secreted from the cells after alternative mRNA splicing. mIL11RA is cleaved by the proteases ADAM10, ELANE and PRTN3. Expressed in a number of cell lines, including the myelogenous leukemia cell line K-562, the megakaryocytic leukemia cell line M-07e, the erythroleukemia cell line TF-1, and the osteosarcoma cell lines, MG-63 and SaOS-2. Also expressed in normal and malignant prostate epithelial cell lines. Expression levels are increased in prostate carcinoma.

The protein localises to the membrane. It is found in the secreted. Functionally, receptor for interleukin-11 (IL11). The receptor systems for IL6, LIF, OSM, CNTF, IL11 and CT1 can utilize IL6ST for initiating signal transmission. The IL11/IL11RA/IL6ST complex may be involved in the control of proliferation and/or differentiation of skeletogenic progenitor or other mesenchymal cells. Essential for the normal development of craniofacial bones and teeth. Restricts suture fusion and tooth number. Soluble form of IL11 receptor (sIL11RA) that acts as an agonist of IL11 activity. The IL11:sIL11RA complex binds to IL6ST/gp130 on cell surfaces and induces signaling also on cells that do not express membrane-bound IL11RA in a process called IL11 trans-signaling. The polypeptide is Interleukin-11 receptor subunit alpha (Homo sapiens (Human)).